A 280-amino-acid chain; its full sequence is uncharacterized protein (280 aa).

Residues M1–V51 constitute a chloroplast transit peptide.

It belongs to the NAD(P)-dependent epimerase/dehydratase family.

The protein resides in the plastid. Its subcellular location is the chloroplast. It localises to the plastoglobule. This is an uncharacterized protein from Arabidopsis thaliana (Mouse-ear cress).